We begin with the raw amino-acid sequence, 887 residues long: ATP-dependent DNA helicase srs2 (887 aa).

Positions 9-304 constitute a UvrD-like helicase ATP-binding domain; the sequence is KFLNEEQRIS…LHLERNYRSA (296 aa). ATP contacts are provided by residues 33-38 and arginine 302; that span reads GSGKTR. In terms of domain architecture, UvrD-like helicase C-terminal spans 305 to 597; sequence KPILELALSI…TISTLHAAKG (293 aa).

This sequence belongs to the helicase family. UvrD subfamily.

Its subcellular location is the nucleus. It catalyses the reaction Couples ATP hydrolysis with the unwinding of duplex DNA by translocating in the 3'-5' direction.. The catalysed reaction is ATP + H2O = ADP + phosphate + H(+). In terms of biological role, ATP-dependent DNA helicase involved in DNA repair at least for UV-induced lesions. Also aids the recombinational repair of camptothecin-induced collapsed replication forks. This Schizosaccharomyces pombe (strain 972 / ATCC 24843) (Fission yeast) protein is ATP-dependent DNA helicase srs2 (srs2).